Here is a 562-residue protein sequence, read N- to C-terminus: MKKSLKDLTGLIVAFALATLLFLYWPLYQRSVPKANNDTPVDVVLIGGGIMSVTLGTYLQELQPDWKIELFERLNGIAQESSDGWNNAGTGHSAFAELNYTPELQDGTIEIKRAIKIAEQFEISREFWSHQVRHGRLPAPTEFINATPHMSFVWGEDRIEYLRKRHNALIKNPLFYGMQFSTDPAVIQQWAPLLMEGRTQDQKIAATYMPLGTDVNFGVITRDLAKHLQYSQNFALHLDHEVTALRQNPDKTWNVTVKNLNNGQERSIKSRFVFIGAGGAALKLLQLSGIPESKDYAGFPVGGQFLSFENTAITKRHNVKAYGMAESGSPPMSVPHLDARKLDGKSIVLFGPFALYSTKFLKKGSWFDLYSSVNHHNAAGMLSVGKNNIDLVKYLMKQATLTDADRHAELLKYFPNAKPTDWTLVTAGQRVQIIKRDPEKGMILQFGTEIVMDKDHTLATLLGASPGASTSPSIMLDLLAKAFPQQMKNGWETQLKKIIPSYGQHINDSPALTNKIRRMTSETLSLPYLEVPDKSATPPDPTIAPKHQHSPTHNANSEMQAL.

The tract at residues 530 to 562 is disordered; it reads EVPDKSATPPDPTIAPKHQHSPTHNANSEMQAL. The span at 551–562 shows a compositional bias: polar residues; it reads PTHNANSEMQAL.

Belongs to the MQO family. It depends on FAD as a cofactor.

The enzyme catalyses (S)-malate + a quinone = a quinol + oxaloacetate. Its pathway is carbohydrate metabolism; tricarboxylic acid cycle; oxaloacetate from (S)-malate (quinone route): step 1/1. The protein is Probable malate:quinone oxidoreductase of Xylella fastidiosa (strain 9a5c).